The following is a 184-amino-acid chain: Bifunctional protein PyrR (184 aa).

Residues 105 to 117 (VVMVDDVLFTGRT) carry the PRPP-binding motif.

Belongs to the purine/pyrimidine phosphoribosyltransferase family. PyrR subfamily.

It carries out the reaction UMP + diphosphate = 5-phospho-alpha-D-ribose 1-diphosphate + uracil. Its function is as follows. Regulates the transcription of the pyrimidine nucleotide (pyr) operon in response to exogenous pyrimidines. Also displays a weak uracil phosphoribosyltransferase activity which is not physiologically significant. The chain is Bifunctional protein PyrR from Rubrobacter xylanophilus (strain DSM 9941 / JCM 11954 / NBRC 16129 / PRD-1).